The chain runs to 144 residues: RNA-binding protein 1 (144 aa).

Residues 11–84 (CKVYVGNLGS…TRIRVEMSSG (74 aa)) enclose the RRM domain. Positions 78–115 (RVEMSSGRSRDRRRGEGGSSGRSGSGRYRITPSARTTS) are disordered.

This sequence belongs to the splicing factor SR family. In terms of assembly, interacts with x16 (via Arg/Ser-rich region). Post-translationally, extensively phosphorylated on serine residues in the RS domain. In terms of processing, the tandem heptapeptide repeats in the C-terminal domain (CTD) can be highly phosphorylated. The phosphorylation activates Pol II. Phosphorylation occurs at residues 'Ser-2', 'Ser-5' and 'Ser-7' of the heptapeptide repeat and is mediated by P-TEFb. Dephosphorylated by the INTAC complex when transcripts are unfavorably configured for transcriptional elongation, leading to premature transcription termination: dephosphorylation is mediated by the mts/PP2A component of the INTAC complex. Ubiquitous.

It localises to the nucleus. In terms of biological role, contributes to the activation of female-specific DSX splicing in vivo by recognizing the RBP1 target sequences within the purine-rich polypyrimidine tract of the female-specific 3' splice site. The polypeptide is RNA-binding protein 1 (Rbp1) (Drosophila melanogaster (Fruit fly)).